The primary structure comprises 402 residues: Digeranylgeranylglycerophospholipid reductase (402 aa).

10 residues coordinate FAD: Gly15, Glu34, Cys45, Ala46, Gly48, Arg99, Ala123, Asp280, Gly292, and Ile293.

Belongs to the geranylgeranyl reductase family. DGGGPL reductase subfamily. The cofactor is FAD.

The enzyme catalyses a 2,3-bis-O-phytanyl-sn-glycerol 1-phospholipid + 8 oxidized 2[4Fe-4S]-[ferredoxin] = a 2,3-bis-O-(geranylgeranyl)-sn-glycerol 1-phospholipid + 8 reduced 2[4Fe-4S]-[ferredoxin] + 16 H(+). The catalysed reaction is 2,3-bis-O-(phytanyl)-sn-glycerol 1-phosphate + 8 oxidized 2[4Fe-4S]-[ferredoxin] = 2,3-bis-O-(geranylgeranyl)-sn-glycerol 1-phosphate + 8 reduced 2[4Fe-4S]-[ferredoxin] + 16 H(+). It catalyses the reaction a 2,3-bis-O-phytanyl-sn-glycerol 1-phospholipid + 8 A = a 2,3-bis-O-(geranylgeranyl)-sn-glycerol 1-phospholipid + 8 AH2. It carries out the reaction CDP-2,3-bis-O-(geranylgeranyl)-sn-glycerol + 8 AH2 = CDP-2,3-bis-O-(phytanyl)-sn-glycerol + 8 A. The enzyme catalyses archaetidylserine + 8 AH2 = 2,3-bis-O-phytanyl-sn-glycero-3-phospho-L-serine + 8 A. The protein operates within membrane lipid metabolism; glycerophospholipid metabolism. Its function is as follows. Is involved in the reduction of 2,3-digeranylgeranylglycerophospholipids (unsaturated archaeols) into 2,3-diphytanylglycerophospholipids (saturated archaeols) in the biosynthesis of archaeal membrane lipids. Catalyzes the formation of archaetidic acid (2,3-di-O-phytanyl-sn-glyceryl phosphate) from 2,3-di-O-geranylgeranylglyceryl phosphate (DGGGP) via the hydrogenation of each double bond of the isoprenoid chains. Is also probably able to reduce double bonds of geranyl groups in CDP-2,3-bis-O-(geranylgeranyl)-sn-glycerol and archaetidylserine, thus acting at various stages in the biosynthesis of archaeal membrane lipids. The polypeptide is Digeranylgeranylglycerophospholipid reductase (Methanospirillum hungatei JF-1 (strain ATCC 27890 / DSM 864 / NBRC 100397 / JF-1)).